The primary structure comprises 82 residues: Photosystem I iron-sulfur center (82 aa).

4Fe-4S ferredoxin-type domains are found at residues 2 to 31 (SHTV…MVPW) and 37 to 68 (GQIA…VRVY). The [4Fe-4S] cluster site is built by cysteine 11, cysteine 14, cysteine 17, cysteine 21, cysteine 48, cysteine 51, cysteine 54, and cysteine 58.

As to quaternary structure, the eukaryotic PSI reaction center is composed of at least 11 subunits. It depends on [4Fe-4S] cluster as a cofactor.

It is found in the plastid. The protein localises to the chloroplast thylakoid membrane. It carries out the reaction reduced [plastocyanin] + hnu + oxidized [2Fe-2S]-[ferredoxin] = oxidized [plastocyanin] + reduced [2Fe-2S]-[ferredoxin]. Functionally, apoprotein for the two 4Fe-4S centers FA and FB of photosystem I (PSI); essential for photochemical activity. FB is the terminal electron acceptor of PSI, donating electrons to ferredoxin. The C-terminus interacts with PsaA/B/D and helps assemble the protein into the PSI complex. Required for binding of PsaD and PsaE to PSI. PSI is a plastocyanin/cytochrome c6-ferredoxin oxidoreductase, converting photonic excitation into a charge separation, which transfers an electron from the donor P700 chlorophyll pair to the spectroscopically characterized acceptors A0, A1, FX, FA and FB in turn. The polypeptide is Photosystem I iron-sulfur center (Trieres chinensis (Marine centric diatom)).